We begin with the raw amino-acid sequence, 279 residues long: Prohibitin-4, mitochondrial (279 aa).

N-acetylglycine is present on Gly2. Residues Gly2–Val6 are Mitochondrial matrix-facing. The chain crosses the membrane as a helical; Signal-anchor for type II membrane protein span at residues Ala7–Leu28. Topologically, residues Asn29–Arg279 are mitochondrial intermembrane.

The protein belongs to the prohibitin family. As to quaternary structure, component of a prohibitin multimeric complex in mitochondrial membranes. As to expression, mostly expressed in proliferative tissues, including vasculature, shoot and root apical tissues. Accumulates in dry seeds.

Its subcellular location is the mitochondrion inner membrane. Its function is as follows. Prohibitin probably acts as a holdase/unfoldase for the stabilization of newly synthesized mitochondrial proteins. This Arabidopsis thaliana (Mouse-ear cress) protein is Prohibitin-4, mitochondrial (PHB4).